Reading from the N-terminus, the 245-residue chain is Phycocyanobilin:ferredoxin oxidoreductase (245 aa).

The protein belongs to the HY2 family.

It catalyses the reaction (2R,3Z)-phycocyanobilin + 4 oxidized [2Fe-2S]-[ferredoxin] = biliverdin IXalpha + 4 reduced [2Fe-2S]-[ferredoxin] + 4 H(+). Its function is as follows. Catalyzes the four-electron reduction of biliverdin IX-alpha (2-electron reduction at both the A and D rings); the reaction proceeds via an isolatable 2-electron intermediate, 181,182-dihydrobiliverdin. The chain is Phycocyanobilin:ferredoxin oxidoreductase (pcyA) from Nostoc punctiforme (strain ATCC 29133 / PCC 73102).